We begin with the raw amino-acid sequence, 649 residues long: Echinoderm microtubule-associated protein-like 2 (649 aa).

The interval 10–649 is tandem atypical propeller in EMLs; that stretch reads KEVIFSVEDG…DTSVLQWRVV (640 aa). 2 coiled-coil regions span residues 13-58 and 73-114; these read IFSV…LKLE and YLLP…LAIH. 12 WD repeats span residues 56-93, 97-144, 151-192, 195-234, 241-280, 285-323, 369-406, 410-447, 452-489, 495-535, 564-602, and 609-648; these read KLEW…LYSV, RQRH…IWDS, HVLG…VWDW, ETKV…FWTL, KRQG…VWGK, ITQA…LWGS, FSLL…LWSS, QPLW…LLDT, LVAI…VYTV, KVSR…YWDP, FGIW…LFSY, and ALSH…QWRV.

It belongs to the WD repeat EMAP family. In terms of assembly, homotrimer; self-association is mediated by the N-terminal coiled coil. As to quaternary structure, interacts with GRID2 and may also interact with GRID1. Interacts with EML3. Binds unpolymerized tubulins via its WD repeat region. In terms of tissue distribution, ubiquitous.

The protein localises to the cytoplasm. The protein resides in the cytoskeleton. Its subcellular location is the spindle. Its function is as follows. Tubulin binding protein that inhibits microtubule nucleation and growth, resulting in shorter microtubules. This Homo sapiens (Human) protein is Echinoderm microtubule-associated protein-like 2 (EML2).